Reading from the N-terminus, the 592-residue chain is Malic enzyme, hydrogenosomal (592 aa).

The N-terminal 27 residues, 1–27, are a transit peptide targeting the hydrogenosome; it reads MLAPIQTIARPVSSILPATGALAAKRT. Catalysis depends on tyrosine 134, which acts as the Proton donor. An NADP(+)-binding site is contributed by 182-205; sequence VTDGSRILGLGDLGAGGMQIPIGK. Arginine 187 contributes to the NAD(+) binding site. Lysine 205 functions as the Proton acceptor in the catalytic mechanism. The a divalent metal cation site is built by glutamate 276, aspartate 277, and aspartate 300. Residue aspartate 300 participates in NAD(+) binding. Position 335–352 (335–352) interacts with NADP(+); sequence GAGSSGVGVCETIVDCIV. Asparagine 443 is an NAD(+) binding site.

This sequence belongs to the malic enzymes family. It depends on Mg(2+) as a cofactor. Mn(2+) serves as cofactor.

Its subcellular location is the hydrogenosome. The enzyme catalyses (S)-malate + NADP(+) = pyruvate + CO2 + NADPH. It carries out the reaction oxaloacetate + H(+) = pyruvate + CO2. This chain is Malic enzyme, hydrogenosomal, found in Neocallimastix frontalis (Rumen fungus).